The sequence spans 463 residues: Glutamyl-tRNA reductase (463 aa).

Residues 49-52, Ser-109, 114-116, and Gln-120 contribute to the substrate site; these read TCNR and EQQ. Catalysis depends on Cys-50, which acts as the Nucleophile. An NADP(+)-binding site is contributed by 196–201; that stretch reads GAGAMS.

Belongs to the glutamyl-tRNA reductase family. In terms of assembly, homodimer.

The catalysed reaction is (S)-4-amino-5-oxopentanoate + tRNA(Glu) + NADP(+) = L-glutamyl-tRNA(Glu) + NADPH + H(+). It functions in the pathway porphyrin-containing compound metabolism; protoporphyrin-IX biosynthesis; 5-aminolevulinate from L-glutamyl-tRNA(Glu): step 1/2. Functionally, catalyzes the NADPH-dependent reduction of glutamyl-tRNA(Glu) to glutamate 1-semialdehyde (GSA). In Corynebacterium glutamicum (strain R), this protein is Glutamyl-tRNA reductase.